A 699-amino-acid polypeptide reads, in one-letter code: MSRDRFRSRGGGGGGFHRRGGGGGRGGLHDFRSPPPGMGLNQNRGPMGPGPGGPKPPLPPPPPHQQQQQPPPQQPPPQQPPPHQQPPPHQPPHQQPPPPPQESKPVVPQGPGSAPGVSSAPPPAVSAPPANPPTTGAPPGPGPTPTPPPAVPSTAPGPPPPSTPSSGVSTTPPQTGGPPPPPAGGAGPGPKPGPGPGGPKGGKMPGGPKPGGGPGMGAPGGHPKPPHRGGGEPRGGRQHHAPYHQQHHQGPPPGGPGPRTEEKISDSEGFKANLSLLRRPGEKTYTQRCRLFVGNLPADITEDEFKRLFAKYGEPGEVFINKGKGFGFIKLESRALAEIAKAELDDTPMRGRQLRVRFATHAAALSVRNLSPYVSNELLEEAFSQFGPIERAVVIVDDRGRSTGKGIVEFASKPAARKAFERCSEGVFLLTTTPRPVIVEPLEQLDDEDGLPEKLAQKNPMYQKERETPPRFAQHGTFEYEYSQRWKSLDEMEKQQREQVEKNMKDAKDKLESEMEDAYHEHQANLLRQDLMRRQEELRRMEELHSQEMQKRKEMQLRQEEERRRREEEMMIRQREMEEQMRRQREESYSRMGYMDPRERDMRMGGGGTMNMGDPYGSGGQKFPPLGGGGGIGYEANPGVPPATMSGSMMGSDMRTERFGQGGAGPVGGQGPRGMGPGTPAGYGRGREEYEGPNKKPRF.

The disordered stretch occupies residues 1–265 (MSRDRFRSRG…PGPRTEEKIS (265 aa)). Ser8 carries the phosphoserine; by MKNK2 modification. Arg9 is subject to Asymmetric dimethylarginine; alternate. At Arg9 the chain carries Omega-N-methylarginine; alternate. Tandem repeats lie at residues 9-11 (RGG), 19-21 (RGG), and 25-27 (RGG). Gly residues predominate over residues 9–26 (RGGGGGGFHRRGGGGGRG). Residues 9-27 (RGGGGGGFHRRGGGGGRGG) form a 3 X 3 AA repeats of R-G-G region. Ser33 carries the phosphoserine modification. Pro residues predominate over residues 48–102 (GPGPGGPKPPLPPPPPHQQQQQPPPQQPPPQQPPPHQQPPPHQPPHQQPPPPPQE). Residues 105–119 (PVVPQGPGSAPGVSS) are compositionally biased toward low complexity. The span at 120–163 (APPPAVSAPPANPPTTGAPPGPGPTPTPPPAVPSTAPGPPPPST) shows a compositional bias: pro residues. A compositionally biased stretch (low complexity) spans 164–174 (PSSGVSTTPPQ). Pro residues predominate over residues 175–197 (TGGPPPPPAGGAGPGPKPGPGPG). Residues 198–220 (GPKGGKMPGGPKPGGGPGMGAPG) show a composition bias toward gly residues. Lys200 is modified (N6-acetyllysine). Residues Arg228, Arg234, and Arg237 each carry the omega-N-methylarginine modification. A compositionally biased stretch (basic residues) spans 236–247 (GRQHHAPYHQQH). Residue Lys263 forms a Glycyl lysine isopeptide (Lys-Gly) (interchain with G-Cter in SUMO2) linkage. Phosphoserine is present on Ser265. Lys271 is covalently cross-linked (Glycyl lysine isopeptide (Lys-Gly) (interchain with G-Cter in SUMO2)). Ser275 bears the Phosphoserine; by MKNK2 mark. Tyr285 carries the post-translational modification Phosphotyrosine; by ALK. RRM domains follow at residues 289 to 361 (CRLF…FATH) and 363 to 444 (AALS…PLEQ). Lys306 carries the post-translational modification N6,N6-dimethyllysine. Lys311 carries the N6-acetyllysine modification. Lys330 bears the N6-acetyllysine; alternate mark. Lys330 is covalently cross-linked (Glycyl lysine isopeptide (Lys-Gly) (interchain with G-Cter in SUMO2); alternate). Thr360 is subject to Phosphothreonine. A phosphoserine mark is found at Ser366 and Ser371. 2 positions are modified to N6-acetyllysine: Lys413 and Lys464. Ser488 bears the Phosphoserine mark. Residues 489–588 (LDEMEKQQRE…EQMRRQREES (100 aa)) are a coiled coil. Arg563 carries the post-translational modification Dimethylated arginine. Residues 571–589 (MIRQREMEEQMRRQREESY) show a composition bias toward basic and acidic residues. The tract at residues 571–699 (MIRQREMEEQ…YEGPNKKPRF (129 aa)) is disordered. Gly residues-rich tracts occupy residues 604 to 633 (MGGG…GGIG) and 660 to 684 (GQGG…AGYG). Ser618 carries the post-translational modification Phosphoserine. At Arg673 the chain carries Omega-N-methylarginine. The residue at position 679 (Thr679) is a Phosphothreonine. Tyr683 carries the post-translational modification Phosphotyrosine. Arg685 bears the Omega-N-methylarginine; alternate mark. At Arg685 the chain carries Dimethylated arginine; alternate. The segment covering 685-699 (RGREEYEGPNKKPRF) has biased composition (basic and acidic residues). Arg687 is modified (omega-N-methylarginine).

In terms of assembly, heterodimer with NONO. Monomer and component of the SFPQ-NONO complex, which is probably a heterotetramer of two 52 kDa (NONO) and two 100 kDa (SFPQ) subunits. The coiled coil domain mediates interaction with NONO, and can also mediate formation of long, linear homooligomers (in vitro). SFPQ is a component of spliceosome and U5.4/6 snRNP complexes. Interacts with SNRPA/U1A. Component of a snRNP-free complex with SNRPA/U1A. Part of complex consisting of SFPQ, NONO and MATR3. Interacts with polypyrimidine tract-binding protein 1/PTB. Part of a complex consisting of SFPQ, NONO and NR5A1. Interacts with RXRA, probably THRA, and SIN3A. Interacts with TOP1. Part of a complex consisting of SFPQ, NONO and TOP1. Interacts with SNRNP70 in apoptotic cells. Interacts with PSPC1. Interacts with RNF43. Interacts with PITX3 and NR4A2/NURR1. Interacts with PTK6. Interacts with THRAP3; the interaction is dependent on SFPQ phosphorylation at 'Thr-687' and inhibits binding of SFPQ to a ESS1 exonic splicing silencer element-containing RNA. The large PER complex involved in the histone deacetylation is composed of at least HDAC1, PER2, SFPQ and SIN3A. Interacts with PER1 and PER2. Part of the HDP-RNP complex composed of at least HEXIM1, PRKDC, XRCC5, XRCC6, paraspeckle proteins (SFPQ, NONO, PSPC1, RBM14, and MATR3) and NEAT1 RNA. Interacts with PQBP1. Component of a multiprotein complex with NONO and WASL. Interacts with ERCC6. Phosphorylated on multiple serine and threonine residues during apoptosis. Phosphorylation of C-terminal tyrosines promotes its cytoplasmic localization, impaired its binding to polypyrimidine RNA and led to cell cycle arrest. In resting T-cells is phosphorylated at Thr-679 by GSK3B which is proposed to promote association with THRAP and to prevent binding to PTPRC/CD45 pre-mRNA; T-cell activation leads to reduced phosphorylation at Thr-679.

Its subcellular location is the nucleus speckle. The protein resides in the nucleus matrix. It localises to the cytoplasm. DNA- and RNA binding protein, involved in several nuclear processes. Essential pre-mRNA splicing factor required early in spliceosome formation and for splicing catalytic step II, probably as a heteromer with NONO. Binds to pre-mRNA in spliceosome C complex, and specifically binds to intronic polypyrimidine tracts. Involved in regulation of signal-induced alternative splicing. During splicing of PTPRC/CD45, a phosphorylated form is sequestered by THRAP3 from the pre-mRNA in resting T-cells; T-cell activation and subsequent reduced phosphorylation is proposed to lead to release from THRAP3 allowing binding to pre-mRNA splicing regulatotry elements which represses exon inclusion. Interacts with U5 snRNA, probably by binding to a purine-rich sequence located on the 3' side of U5 snRNA stem 1b. May be involved in a pre-mRNA coupled splicing and polyadenylation process as component of a snRNP-free complex with SNRPA/U1A. The SFPQ-NONO heteromer associated with MATR3 may play a role in nuclear retention of defective RNAs. SFPQ may be involved in homologous DNA pairing; in vitro, promotes the invasion of ssDNA between a duplex DNA and produces a D-loop formation. The SFPQ-NONO heteromer may be involved in DNA unwinding by modulating the function of topoisomerase I/TOP1; in vitro, stimulates dissociation of TOP1 from DNA after cleavage and enhances its jumping between separate DNA helices. The SFPQ-NONO heteromer binds DNA. The SFPQ-NONO heteromer may be involved in DNA non-homologous end joining (NHEJ) required for double-strand break repair and V(D)J recombination and may stabilize paired DNA ends; in vitro, the complex strongly stimulates DNA end joining, binds directly to the DNA substrates and cooperates with the Ku70/G22P1-Ku80/XRCC5 (Ku) dimer to establish a functional preligation complex. SFPQ is involved in transcriptional regulation. Functions as a transcriptional activator. Transcriptional repression is mediated by an interaction of SFPQ with SIN3A and subsequent recruitment of histone deacetylases (HDACs). The SFPQ-NONO-NR5A1 complex binds to the CYP17 promoter and regulates basal and cAMP-dependent transcriptional activity. SFPQ isoform Long binds to the DNA binding domains (DBD) of nuclear hormone receptors, like RXRA and probably THRA, and acts as a transcriptional corepressor in absence of hormone ligands. Binds the DNA sequence 5'-CTGAGTC-3' in the insulin-like growth factor response element (IGFRE) and inhibits IGF1-stimulated transcriptional activity. Regulates the circadian clock by repressing the transcriptional activator activity of the CLOCK-BMAL1 heterodimer. Required for the transcriptional repression of circadian target genes, such as PER1, mediated by the large PER complex through histone deacetylation. Required for the assembly of nuclear speckles. Plays a role in the regulation of DNA virus-mediated innate immune response by assembling into the HDP-RNP complex, a complex that serves as a platform for IRF3 phosphorylation and subsequent innate immune response activation through the cGAS-STING pathway. This is Splicing factor, proline- and glutamine-rich (Sfpq) from Mus musculus (Mouse).